Consider the following 236-residue polypeptide: Small ribosomal subunit protein uS2c (236 aa).

This sequence belongs to the universal ribosomal protein uS2 family.

It is found in the plastid. It localises to the chloroplast. This chain is Small ribosomal subunit protein uS2c (rps2), found in Olimarabidopsis pumila (Dwarf rocket).